The chain runs to 228 residues: Prolactin-2B1 (228 aa).

The N-terminal stretch at 1-31 is a signal peptide; that stretch reads MLLSLTQMLSSRASSRLFLVSYLLLWENVVS. 2 disulfide bridges follow: Cys89–Cys194 and Cys203–Cys228.

It belongs to the somatotropin/prolactin family. As to expression, expressed specifically in placenta. Expressed at high levels in trophoblast cells from both junctional and labyrinth zones of the chorioallantoic placenta the last week of gestation.

Its subcellular location is the secreted. The chain is Prolactin-2B1 (Prl2b1) from Mus musculus (Mouse).